Reading from the N-terminus, the 352-residue chain is MVKLKGLRQINPYVAGQQPNERDMIKLNTNENAYGPSPKVAEALQNFDDQELRKYSSLDQTELCQALAANLGVSPDQLIIGNGSDDILSMAFLAFFNSGESVLFPDLTYGFYKVWADLYHVPFREIPLTDDFEVHPSDYFGDNGGIILANPNAPTGIYLPLEQLEEILASNQDVVVVVDEAYIHFGGQSALPLLETYPNLFITRTFSKDAALAGLRVGYGLGHPDLIAVMKAVKDSINPYSVDLLAESLALAAVQDWDYYLETGRAIQETRDWFAGELAALDFQVLTSQTNFVLAQPSGISAAELFQQLEERRIYVRYFPKAERIKDFLRISIGRREEMETVLAAIEEICSS.

K208 carries the post-translational modification N6-(pyridoxal phosphate)lysine.

The protein belongs to the class-II pyridoxal-phosphate-dependent aminotransferase family. Histidinol-phosphate aminotransferase subfamily. Homodimer. Pyridoxal 5'-phosphate serves as cofactor.

It catalyses the reaction L-histidinol phosphate + 2-oxoglutarate = 3-(imidazol-4-yl)-2-oxopropyl phosphate + L-glutamate. Its pathway is amino-acid biosynthesis; L-histidine biosynthesis; L-histidine from 5-phospho-alpha-D-ribose 1-diphosphate: step 7/9. This is Histidinol-phosphate aminotransferase from Streptococcus sanguinis (strain SK36).